Here is a 322-residue protein sequence, read N- to C-terminus: Cysteine protease YopT (322 aa).

Residues Cys-139, His-258, and Asp-274 contribute to the active site.

It belongs to the peptidase C58 family. As to quaternary structure, interacts with human ARHA.

The protein localises to the secreted. Its function is as follows. Cysteine protease, which is translocated into infected cells and plays a central role in pathogenesis by cleaving the C-terminus end of the human small GTPase RhoA/ARHA, a regulator of cytoskeleton. Once cleaved, ARHA loses its lipid modification, and is released from the cell membrane, leading to the subsequent disruption of actin cytoskeleton of the host cell. The protein is Cysteine protease YopT (yopT) of Yersinia pseudotuberculosis serotype I (strain IP32953).